We begin with the raw amino-acid sequence, 260 residues long: Exosome complex component Rrp4 (260 aa).

The region spanning 59–128 (NDVVIGVVIV…SSMKIELALR (70 aa)) is the S1 motif domain. The 59-residue stretch at 136–194 (RTGQIVEVEPVKVPRVIGHGGSMISMLKKETNCSIFVGQNGRIWIDGKDEDIELLSKAL) folds into the KH domain.

Belongs to the RRP4 family. Component of the archaeal exosome complex. Forms a trimer of Rrp4 and/or Csl4 subunits. The trimer associates with a hexameric ring-like arrangement composed of 3 Rrp41-Rrp42 heterodimers.

It is found in the cytoplasm. In terms of biological role, non-catalytic component of the exosome, which is a complex involved in RNA degradation. Increases the RNA binding and the efficiency of RNA degradation. Confers strong poly(A) specificity to the exosome. This chain is Exosome complex component Rrp4, found in Methanosarcina mazei (strain ATCC BAA-159 / DSM 3647 / Goe1 / Go1 / JCM 11833 / OCM 88) (Methanosarcina frisia).